Reading from the N-terminus, the 250-residue chain is 7-cyano-7-deazaguanine synthase (250 aa).

28-38 (LSGGLDSATCV) contributes to the ATP binding site. The Zn(2+) site is built by C213, C226, C229, and C232.

Belongs to the QueC family. Zn(2+) is required as a cofactor.

It catalyses the reaction 7-carboxy-7-deazaguanine + NH4(+) + ATP = 7-cyano-7-deazaguanine + ADP + phosphate + H2O + H(+). It functions in the pathway purine metabolism; 7-cyano-7-deazaguanine biosynthesis. Its function is as follows. Catalyzes the ATP-dependent conversion of 7-carboxy-7-deazaguanine (CDG) to 7-cyano-7-deazaguanine (preQ(0)). This is 7-cyano-7-deazaguanine synthase from Rhodopirellula baltica (strain DSM 10527 / NCIMB 13988 / SH1).